We begin with the raw amino-acid sequence, 316 residues long: Ribosomal protein L11 methyltransferase (316 aa).

S-adenosyl-L-methionine-binding residues include Thr-157, Gly-178, Asp-200, and Asn-243.

The protein belongs to the methyltransferase superfamily. PrmA family.

It localises to the cytoplasm. The enzyme catalyses L-lysyl-[protein] + 3 S-adenosyl-L-methionine = N(6),N(6),N(6)-trimethyl-L-lysyl-[protein] + 3 S-adenosyl-L-homocysteine + 3 H(+). Methylates ribosomal protein L11. This is Ribosomal protein L11 methyltransferase from Streptococcus pneumoniae (strain ATCC 700669 / Spain 23F-1).